A 628-amino-acid polypeptide reads, in one-letter code: tRNA uridine 5-carboxymethylaminomethyl modification enzyme MnmG (628 aa).

13–18 (GAGHAG) is a binding site for FAD. 281 to 295 (GARYCPSIEDKIKKF) lines the NAD(+) pocket.

This sequence belongs to the MnmG family. As to quaternary structure, homodimer. Heterotetramer of two MnmE and two MnmG subunits. The cofactor is FAD.

It is found in the cytoplasm. Functionally, NAD-binding protein involved in the addition of a carboxymethylaminomethyl (cmnm) group at the wobble position (U34) of certain tRNAs, forming tRNA-cmnm(5)s(2)U34. This chain is tRNA uridine 5-carboxymethylaminomethyl modification enzyme MnmG, found in Treponema denticola (strain ATCC 35405 / DSM 14222 / CIP 103919 / JCM 8153 / KCTC 15104).